The primary structure comprises 347 residues: Transcription factor EC (347 aa).

Residues 1 to 119 (MTLDHQIINP…GLTSASCPSS (119 aa)) are necessary for transcriptional transactivation. The bHLH domain occupies 139-192 (QKKDNHNLIERRRRYNINYRIKELGTLIPKSNDPDMRWNKGTILKASVEYIKWL). Positions 271–347 (PSPELCDQAI…SFSSDDGDEL (77 aa)) are necessary for transcriptional transactivation. Residues 319–347 (DPLLSATSPAVSKESSRRSSFSSDDGDEL) are disordered. Low complexity predominate over residues 326–341 (SPAVSKESSRRSSFSS).

Belongs to the MiT/TFE family. As to quaternary structure, homodimer. Forms heterodimers with TFE3. Forms heterodimers with MITF. Interacts with MITF. As to expression, expressed moderately in spleen, kidney, bone marrow, small intestine and leukocytes. Expressed weakly in testis, trachea and colon.

Its subcellular location is the nucleus. Functionally, transcriptional regulator that acts as a repressor or an activator. Acts as a transcriptional repressor on minimal promoter containing element F (that includes an E-box sequence). Binds to element F in an E-box sequence-specific manner. Acts as a transcriptional transactivator on the proximal promoter region of the tartrate-resistant acid phosphatase (TRAP) E-box containing promoter. Collaborates with MITF in target gene activation. Acts as a transcriptional repressor on minimal promoter containing mu E3 enhancer sequence. Binds to mu E3 DNA sequence of the immunoglobulin heavy-chain gene enhancer. Binds DNA in a homo- or heterodimeric form. This chain is Transcription factor EC (TFEC), found in Homo sapiens (Human).